We begin with the raw amino-acid sequence, 250 residues long: N-acetylmuramoyl-L-alanine amidase CwlH (250 aa).

The signal sequence occupies residues 1-44 (MVTIKKDFIPVSNDNRPGYAMAPAYITVHNTANTAKGADAKMHA). The 97-residue stretch at 45–141 (KFVKNPNTSE…KKWSGKECPR (97 aa)) folds into the N-acetylmuramoyl-L-alanine amidase domain.

This sequence belongs to the N-acetylmuramoyl-L-alanine amidase 2 family.

It localises to the secreted. The enzyme catalyses Hydrolyzes the link between N-acetylmuramoyl residues and L-amino acid residues in certain cell-wall glycopeptides.. Functionally, autolysins are involved in some important biological processes such as cell separation, cell-wall turnover, competence for genetic transformation, formation of the flagella and sporulation. Could play a role in mother cell lysis with CwlC. The polypeptide is N-acetylmuramoyl-L-alanine amidase CwlH (cwlH) (Bacillus subtilis (strain 168)).